The chain runs to 348 residues: Protein RecA (348 aa).

64 to 71 is a binding site for ATP; sequence GPESSGKT. Residues 325–335 show a composition bias toward basic and acidic residues; it reads YEIDGSNKEPL. The tract at residues 325–348 is disordered; sequence YEIDGSNKEPLDEGEETLSLLDDE. Residues 336–348 show a composition bias toward acidic residues; the sequence is DEGEETLSLLDDE.

It belongs to the RecA family.

The protein localises to the cytoplasm. Can catalyze the hydrolysis of ATP in the presence of single-stranded DNA, the ATP-dependent uptake of single-stranded DNA by duplex DNA, and the ATP-dependent hybridization of homologous single-stranded DNAs. It interacts with LexA causing its activation and leading to its autocatalytic cleavage. The chain is Protein RecA from Listeria monocytogenes serotype 4b (strain CLIP80459).